Consider the following 149-residue polypeptide: Large ribosomal subunit protein bL9 (149 aa).

This sequence belongs to the bacterial ribosomal protein bL9 family.

Its function is as follows. Binds to the 23S rRNA. This Helicobacter pylori (strain HPAG1) protein is Large ribosomal subunit protein bL9.